We begin with the raw amino-acid sequence, 339 residues long: Pre-mRNA-splicing factor syf2 (339 aa).

Residues 1–136 are disordered; it reads MPPEKKRKTE…LQSDPSQLTA (136 aa). A compositionally biased stretch (basic and acidic residues) spans 7–16; it reads RKTEPEDKAE. The span at 17–37 shows a compositional bias: polar residues; that stretch reads VTQQENDVAESTTEPNNQTVT. The segment covering 45 to 93 has biased composition (low complexity); it reads VTEAALATTSSSSPPVLSASETAQPDTAATSQSSSTPPTSTSAAESAAA. The span at 94-103 shows a compositional bias: basic and acidic residues; that stretch reads KARERAERFR. The segment covering 126-135 has biased composition (polar residues); the sequence is RLQSDPSQLT.

This sequence belongs to the SYF2 family. As to quaternary structure, associated with the spliceosome.

The protein resides in the nucleus. In terms of biological role, involved in pre-mRNA splicing. The protein is Pre-mRNA-splicing factor syf2 (msp-4) of Neurospora crassa (strain ATCC 24698 / 74-OR23-1A / CBS 708.71 / DSM 1257 / FGSC 987).